Here is a 188-residue protein sequence, read N- to C-terminus: dCTP deaminase (188 aa).

DCTP contacts are provided by residues 111 to 116 (KSTYAR), 135 to 137 (TLE), Q156, Y170, and Q180. E137 (proton donor/acceptor) is an active-site residue.

Belongs to the dCTP deaminase family. As to quaternary structure, homotrimer.

The enzyme catalyses dCTP + H2O + H(+) = dUTP + NH4(+). It functions in the pathway pyrimidine metabolism; dUMP biosynthesis; dUMP from dCTP (dUTP route): step 1/2. Its function is as follows. Catalyzes the deamination of dCTP to dUTP. The protein is dCTP deaminase of Neisseria meningitidis serogroup C / serotype 2a (strain ATCC 700532 / DSM 15464 / FAM18).